Consider the following 130-residue polypeptide: KIYERCELARTLKKLGLDGYKGVSLANWMCLAKWESSYNTRATNYNPGDKSTDYGIFQINSRYWCNDGKTPRAVNACHIPCSDLLKDDITQAVACAKRVVSDPQGIRAWVAWRNHCQNQDLTPYIRGCGV.

Residues K1 to V130 enclose the C-type lysozyme domain. 4 cysteine pairs are disulfide-bonded: C6-C128, C30-C116, C65-C81, and C77-C95. Residues E35 and D53 contribute to the active site.

This sequence belongs to the glycosyl hydrolase 22 family. Monomer.

It localises to the secreted. It catalyses the reaction Hydrolysis of (1-&gt;4)-beta-linkages between N-acetylmuramic acid and N-acetyl-D-glucosamine residues in a peptidoglycan and between N-acetyl-D-glucosamine residues in chitodextrins.. Lysozymes have primarily a bacteriolytic function; those in tissues and body fluids are associated with the monocyte-macrophage system and enhance the activity of immunoagents. The chain is Lysozyme C (LYZ) from Oryctolagus cuniculus (Rabbit).